The sequence spans 89 residues: Small ribosomal subunit protein uS15 (89 aa).

This sequence belongs to the universal ribosomal protein uS15 family. Part of the 30S ribosomal subunit. Forms a bridge to the 50S subunit in the 70S ribosome, contacting the 23S rRNA.

Functionally, one of the primary rRNA binding proteins, it binds directly to 16S rRNA where it helps nucleate assembly of the platform of the 30S subunit by binding and bridging several RNA helices of the 16S rRNA. Forms an intersubunit bridge (bridge B4) with the 23S rRNA of the 50S subunit in the ribosome. This is Small ribosomal subunit protein uS15 from Photobacterium profundum (strain SS9).